The sequence spans 180 residues: Large ribosomal subunit protein uL6 (180 aa).

The protein belongs to the universal ribosomal protein uL6 family. As to quaternary structure, part of the 50S ribosomal subunit.

This protein binds to the 23S rRNA, and is important in its secondary structure. It is located near the subunit interface in the base of the L7/L12 stalk, and near the tRNA binding site of the peptidyltransferase center. In Borreliella burgdorferi (strain ATCC 35210 / DSM 4680 / CIP 102532 / B31) (Borrelia burgdorferi), this protein is Large ribosomal subunit protein uL6.